The primary structure comprises 129 residues: HTH-type transcriptional regulator HmrR (129 aa).

The 68-residue stretch at 1–68 (MNIGEASERS…VEECRQLLAL (68 aa)) folds into the HTH merR-type domain. The segment at residues 4 to 23 (GEASERSGLPSKTIRYYEDI) is a DNA-binding region (H-T-H motif).

As to quaternary structure, homodimer.

It localises to the cytoplasm. Its function is as follows. Regulates the transcription of actP. It detects cytoplasmic copper stress and activates transcription in response to increasing copper concentrations. In the absence of copper, it negatively regulates the transcription of actP. In Rhizobium leguminosarum bv. viciae, this protein is HTH-type transcriptional regulator HmrR (hmrR).